The sequence spans 653 residues: Fidgetin-like protein 2 (653 aa).

3 disordered regions span residues 1–36 (MHWTPEHAQPLNQWPEQHLDVSSTTPSPAHKLELPP), 86–129 (ASFL…SGAL), and 216–240 (YGALPPPPGPPPAPYLTPGLPAPTP). Residues 10–27 (PLNQWPEQHLDVSSTTPS) show a composition bias toward polar residues. Pro residues predominate over residues 97 to 107 (EPWPGPEPPYP). Over residues 119–129 (KSGGGGGSGAL) the composition is skewed to gly residues. Over residues 219 to 240 (LPPPPGPPPAPYLTPGLPAPTP) the composition is skewed to pro residues. ATP is bound by residues A395 and 435–440 (GAGKAL).

The protein belongs to the AAA ATPase family. The cofactor is Mg(2+).

Its subcellular location is the cytoplasm. The protein resides in the cell cortex. The catalysed reaction is ATP + H2O = ADP + phosphate + H(+). Functionally, microtubule-severing enzyme that negatively regulates cell migration and wound healing. In migrating cells, targets dynamic microtubules (MTs) at the leading edge and severs them, thereby suppressing motility. Microtubule severing releases ARHGEF2 which activates RHOA, which in turn regulates focal ahesion turnover via focal adhesion kinase, as opposed to F-actin polymerization, to suppress cell motility. Negative regulator of axon regeneration that suppresses axonal growth by selectively severing dynamic MTs in the distal axon shaft and growth cone. Contributes to proper cell branching during endothelial and neuronal development. The polypeptide is Fidgetin-like protein 2 (Homo sapiens (Human)).